Here is a 412-residue protein sequence, read N- to C-terminus: NADH-quinone oxidoreductase subunit D (412 aa).

The protein belongs to the complex I 49 kDa subunit family. As to quaternary structure, NDH-1 is composed of 14 different subunits. Subunits NuoB, C, D, E, F, and G constitute the peripheral sector of the complex.

Its subcellular location is the cell inner membrane. The catalysed reaction is a quinone + NADH + 5 H(+)(in) = a quinol + NAD(+) + 4 H(+)(out). NDH-1 shuttles electrons from NADH, via FMN and iron-sulfur (Fe-S) centers, to quinones in the respiratory chain. The immediate electron acceptor for the enzyme in this species is believed to be a menaquinone. Couples the redox reaction to proton translocation (for every two electrons transferred, four hydrogen ions are translocated across the cytoplasmic membrane), and thus conserves the redox energy in a proton gradient. The chain is NADH-quinone oxidoreductase subunit D from Flavobacterium johnsoniae (strain ATCC 17061 / DSM 2064 / JCM 8514 / BCRC 14874 / CCUG 350202 / NBRC 14942 / NCIMB 11054 / UW101) (Cytophaga johnsonae).